The chain runs to 314 residues: tRNA dimethylallyltransferase (314 aa).

40-47 (GPTASGKS) is an ATP binding site. 42 to 47 (TASGKS) is a substrate binding site.

The protein belongs to the IPP transferase family. In terms of assembly, monomer. Mg(2+) serves as cofactor.

It carries out the reaction adenosine(37) in tRNA + dimethylallyl diphosphate = N(6)-dimethylallyladenosine(37) in tRNA + diphosphate. Catalyzes the transfer of a dimethylallyl group onto the adenine at position 37 in tRNAs that read codons beginning with uridine, leading to the formation of N6-(dimethylallyl)adenosine (i(6)A). The sequence is that of tRNA dimethylallyltransferase from Cereibacter sphaeroides (strain KD131 / KCTC 12085) (Rhodobacter sphaeroides).